The following is a 154-amino-acid chain: dCTP deaminase (154 aa).

DCTP is bound by residues 79–84, D95, Q124, and Y138; that span reads RSSLAR.

Belongs to the dCTP deaminase family. As to quaternary structure, homotrimer.

The enzyme catalyses dCTP + H2O + H(+) = dUTP + NH4(+). The protein operates within pyrimidine metabolism; dUMP biosynthesis; dUMP from dCTP (dUTP route): step 1/2. In terms of biological role, catalyzes the deamination of dCTP to dUTP. This is dCTP deaminase from Pyrococcus abyssi (strain GE5 / Orsay).